Reading from the N-terminus, the 284-residue chain is uncharacterized protein (284 aa).

The N-terminal stretch at 1–23 (MKRGCAIAVMICGLITSVSAASA) is a signal peptide.

Belongs to the surface antigen msp4 family.

This is an uncharacterized protein from Brucella suis biovar 1 (strain 1330).